The following is a 355-amino-acid chain: 6-aminohexanoate-oligomer endohydrolase (355 aa).

The active-site Nucleophile is the Thr-267.

Belongs to the peptidase S58 family. As to quaternary structure, heterotetramer composed of 4 alpha/beta heterodimers. In terms of processing, expressed as an inactive precursor that is cleaved autocatalytically at Asn266/Thr267 to generate an active enzyme composed of an alpha subunit and a beta subunit.

The catalysed reaction is [N-(6-aminohexanoyl)]n + H2O = [N-(6-aminohexanoyl)]n-x + [N-(6-aminohexanoyl)]x.. Its pathway is xenobiotic degradation; nylon-6 oligomer degradation. Involved in the degradation of nylon-6 oligomers. Degrades cyclic and linear oligomers of 6-aminohexanoate (Ahx) with a degree of polymerization greater than three by an endo-type mode. Cannot use Ahx cyclic dimer or the Ahx linear dimer. The polypeptide is 6-aminohexanoate-oligomer endohydrolase (Kocuria sp. (strain KY2)).